The sequence spans 242 residues: Biosynthetic peptidoglycan transglycosylase (242 aa).

A helical membrane pass occupies residues 19-39 (LMVVLAVFWGGGIALFSVAPV).

This sequence belongs to the glycosyltransferase 51 family.

It is found in the cell inner membrane. The enzyme catalyses [GlcNAc-(1-&gt;4)-Mur2Ac(oyl-L-Ala-gamma-D-Glu-L-Lys-D-Ala-D-Ala)](n)-di-trans,octa-cis-undecaprenyl diphosphate + beta-D-GlcNAc-(1-&gt;4)-Mur2Ac(oyl-L-Ala-gamma-D-Glu-L-Lys-D-Ala-D-Ala)-di-trans,octa-cis-undecaprenyl diphosphate = [GlcNAc-(1-&gt;4)-Mur2Ac(oyl-L-Ala-gamma-D-Glu-L-Lys-D-Ala-D-Ala)](n+1)-di-trans,octa-cis-undecaprenyl diphosphate + di-trans,octa-cis-undecaprenyl diphosphate + H(+). Its pathway is cell wall biogenesis; peptidoglycan biosynthesis. Functionally, peptidoglycan polymerase that catalyzes glycan chain elongation from lipid-linked precursors. The sequence is that of Biosynthetic peptidoglycan transglycosylase from Escherichia coli (strain SMS-3-5 / SECEC).